The following is a 330-amino-acid chain: Glucokinase (330 aa).

It belongs to the ROK (NagC/XylR) family.

It localises to the cytoplasm. It catalyses the reaction D-glucose + ATP = D-glucose 6-phosphate + ADP + H(+). The chain is Glucokinase (glcK) from Halalkalibacterium halodurans (strain ATCC BAA-125 / DSM 18197 / FERM 7344 / JCM 9153 / C-125) (Bacillus halodurans).